Here is a 771-residue protein sequence, read N- to C-terminus: Ribonucleoside-diphosphate reductase large subunit (771 aa).

The 92-residue stretch at Met1 to Lys92 folds into the ATP-cone domain. ATP-binding positions include Lys5–Arg6, Glu11–Lys17, Thr53, Asp57, and Lys88. Ser202 and Ser217 together coordinate GDP. DTTP contacts are provided by residues Asp226–Ile228, Lys243, and Arg256. Asn427 is a GDP binding site. Asn427 acts as the Proton acceptor in catalysis. The active-site Cysteine radical intermediate is Cys429. GDP is bound by residues Glu431 and Thr603 to Thr606. Glu431 acts as the Proton acceptor in catalysis.

The protein belongs to the ribonucleoside diphosphate reductase large chain family. Interacts with RNR2/OPG047 subunit. Mg(2+) serves as cofactor.

The catalysed reaction is a 2'-deoxyribonucleoside 5'-diphosphate + [thioredoxin]-disulfide + H2O = a ribonucleoside 5'-diphosphate + [thioredoxin]-dithiol. In terms of biological role, ribonucleoside-diphosphate reductase holoenzyme provides the precursors necessary for viral DNA synthesis. Allows virus growth in non-dividing cells. Catalyzes the biosynthesis of deoxyribonucleotides from the corresponding ribonucleotides. The chain is Ribonucleoside-diphosphate reductase large subunit (OPG080) from Monkeypox virus.